The following is a 423-amino-acid chain: MLDVKRIRNNPEAVRIAIELKGEKADIDRFLELDEKRRQMLVELETLKNRRNVESDNIAKLKREGKDASDLIAEMKELSDKIKEMEQEVKEVEEELERILWTIPNIPHESVPIGDSDEDNVEIRRWGEPRKFDFEPKPHWEIGQELDILDFEAAARVTGSRFTFYKGLGARLERALINFMLDLHIEKHGYTEVFPPFMVHRRSMFGTGQLPKFEEDAFKVYGTDYFLIPTAEVPVTNMYRDTIIDGDKLPIYHCAYSACFRQEAGSAGRDTRGLIRQHQFNKVELVKFTEPDKSYEELEKMTRDAEEVLQALGLPYRVVVICTGDLGFTASKKYDIEVWMPSYGRYVEISSCSNCEDFQARRANIKYRPKDGGKAQYVHTLNGSGVAVGRTFAAILENYQQEDGSVVIPEVLRPYMKVDVIKK.

230–232 provides a ligand contact to L-serine; sequence TAE. Position 261 to 263 (261 to 263) interacts with ATP; sequence RQE. Glu284 contacts L-serine. Residue 348–351 participates in ATP binding; the sequence is EISS. Residue Ser384 coordinates L-serine.

It belongs to the class-II aminoacyl-tRNA synthetase family. Type-1 seryl-tRNA synthetase subfamily. As to quaternary structure, homodimer. The tRNA molecule binds across the dimer.

Its subcellular location is the cytoplasm. The catalysed reaction is tRNA(Ser) + L-serine + ATP = L-seryl-tRNA(Ser) + AMP + diphosphate + H(+). The enzyme catalyses tRNA(Sec) + L-serine + ATP = L-seryl-tRNA(Sec) + AMP + diphosphate + H(+). Its pathway is aminoacyl-tRNA biosynthesis; selenocysteinyl-tRNA(Sec) biosynthesis; L-seryl-tRNA(Sec) from L-serine and tRNA(Sec): step 1/1. Catalyzes the attachment of serine to tRNA(Ser). Is also able to aminoacylate tRNA(Sec) with serine, to form the misacylated tRNA L-seryl-tRNA(Sec), which will be further converted into selenocysteinyl-tRNA(Sec). The polypeptide is Serine--tRNA ligase (Thermoanaerobacter pseudethanolicus (strain ATCC 33223 / 39E) (Clostridium thermohydrosulfuricum)).